The following is a 176-amino-acid chain: Late embryogenesis abundant protein 49 (176 aa).

SMP domains follow at residues 49-106 and 115-171; these read TTLT…RNQK and NLGD…KLNH.

The protein belongs to the LEA type SMP family.

It localises to the cytoplasm. The protein localises to the nucleus. In terms of biological role, LEA proteins are late embryonic proteins abundant in higher plant seed embryos. The function of those proteins is not known. This chain is Late embryogenesis abundant protein 49, found in Arabidopsis thaliana (Mouse-ear cress).